Consider the following 331-residue polypeptide: Putative heat stress transcription factor A-6a (331 aa).

Residues Arg135–Glu160 are disordered. Positions Glu156–Ala238 form a coiled coil. The hydrophobic repeat HR-A/B stretch occupies residues Leu162–Leu212. A Nuclear localization signal motif is present at residues Glu230–Arg235. The short motif at Leu246 to Leu253 is the Nuclear export signal element. Positions Asp270–Glu279 match the AHA1 motif. The AHA2 motif lies at Ala305 to Glu313.

It belongs to the HSF family. Class A subfamily. In terms of assembly, homotrimer. Exhibits temperature-dependent phosphorylation.

Its subcellular location is the cytoplasm. It is found in the nucleus. Transcriptional regulator that specifically binds DNA of heat shock promoter elements (HSE). In Oryza sativa subsp. japonica (Rice), this protein is Putative heat stress transcription factor A-6a (HSFA6A).